The primary structure comprises 390 residues: Queuine tRNA-ribosyltransferase (390 aa).

Residue D92 is the Proton acceptor of the active site. Substrate contacts are provided by residues 92–96 (DSGGF), D146, Q195, and G222. An RNA binding region spans residues 253 to 259 (GVGTPED). The Nucleophile role is filled by D272. Positions 277 to 281 (TRNAR) are RNA binding; important for wobble base 34 recognition. Positions 310, 312, 315, and 354 each coordinate Zn(2+).

It belongs to the queuine tRNA-ribosyltransferase family. In terms of assembly, homodimer. Within each dimer, one monomer is responsible for RNA recognition and catalysis, while the other monomer binds to the replacement base PreQ1. Requires Zn(2+) as cofactor.

The enzyme catalyses 7-aminomethyl-7-carbaguanine + guanosine(34) in tRNA = 7-aminomethyl-7-carbaguanosine(34) in tRNA + guanine. It functions in the pathway tRNA modification; tRNA-queuosine biosynthesis. Functionally, catalyzes the base-exchange of a guanine (G) residue with the queuine precursor 7-aminomethyl-7-deazaguanine (PreQ1) at position 34 (anticodon wobble position) in tRNAs with GU(N) anticodons (tRNA-Asp, -Asn, -His and -Tyr). Catalysis occurs through a double-displacement mechanism. The nucleophile active site attacks the C1' of nucleotide 34 to detach the guanine base from the RNA, forming a covalent enzyme-RNA intermediate. The proton acceptor active site deprotonates the incoming PreQ1, allowing a nucleophilic attack on the C1' of the ribose to form the product. After dissociation, two additional enzymatic reactions on the tRNA convert PreQ1 to queuine (Q), resulting in the hypermodified nucleoside queuosine (7-(((4,5-cis-dihydroxy-2-cyclopenten-1-yl)amino)methyl)-7-deazaguanosine). This is Queuine tRNA-ribosyltransferase from Verminephrobacter eiseniae (strain EF01-2).